The sequence spans 119 residues: Large ribosomal subunit protein bL20 (119 aa).

The protein belongs to the bacterial ribosomal protein bL20 family.

In terms of biological role, binds directly to 23S ribosomal RNA and is necessary for the in vitro assembly process of the 50S ribosomal subunit. It is not involved in the protein synthesizing functions of that subunit. The sequence is that of Large ribosomal subunit protein bL20 from Colwellia psychrerythraea (strain 34H / ATCC BAA-681) (Vibrio psychroerythus).